Consider the following 201-residue polypeptide: Large ribosomal subunit protein bL25 (201 aa).

This sequence belongs to the bacterial ribosomal protein bL25 family. CTC subfamily. Part of the 50S ribosomal subunit; part of the 5S rRNA/L5/L18/L25 subcomplex. Contacts the 5S rRNA. Binds to the 5S rRNA independently of L5 and L18.

Functionally, this is one of the proteins that binds to the 5S RNA in the ribosome where it forms part of the central protuberance. This Thiobacillus denitrificans (strain ATCC 25259 / T1) protein is Large ribosomal subunit protein bL25.